The primary structure comprises 131 residues: Small ribosomal subunit protein uS11 (131 aa).

Belongs to the universal ribosomal protein uS11 family. In terms of assembly, part of the 30S ribosomal subunit. Interacts with proteins S7 and S18. Binds to IF-3. Interacts with VmlR. Interacts with BrxC.

Functionally, located on the platform of the 30S subunit, it bridges several disparate RNA helices of the 16S rRNA. Forms part of the Shine-Dalgarno cleft in the 70S ribosome. The protein is Small ribosomal subunit protein uS11 of Bacillus subtilis (strain 168).